The chain runs to 209 residues: MAIHTLLFVSLLIFSLIESSSGGKKDRLFTDLQNSIEVTAKPVKDSGVLEAGKDMVTITWKLKSSSAKVDTDTAFKTIQVKLCYAPISQVDRPWRKTDNKLFKDRSCPHEIVSKAYDKTPQSLDWTIGLDIPTGTYFVRAYGIDGDGHEVAYGQSTDEGRTTNLFSVHAISGHHVGLDIASTFFSVFSVVSLFVFFVMEKRKAKLEQRE.

The first 22 residues, Met-1–Gly-22, serve as a signal peptide directing secretion. Residues Leu-177–Val-197 traverse the membrane as a helical segment.

Belongs to the NAR2 family. In terms of tissue distribution, bearly detected in roots and shoots.

It localises to the cell membrane. In terms of biological role, acts as a dual component transporter with NTR2.1. Required for high-affinity nitrate transport. This is High-affinity nitrate transporter 3.2 from Arabidopsis thaliana (Mouse-ear cress).